A 181-amino-acid chain; its full sequence is uncharacterized protein (181 aa).

The 178-residue stretch at 1–178 folds into the Macro domain; sequence MVVAYKLSNG…VFKKVFDNSL (178 aa).

This is an uncharacterized protein from Sulfolobus acidocaldarius (strain ATCC 33909 / DSM 639 / JCM 8929 / NBRC 15157 / NCIMB 11770).